Reading from the N-terminus, the 452-residue chain is tRNA modification GTPase MnmE (452 aa).

3 residues coordinate (6S)-5-formyl-5,6,7,8-tetrahydrofolate: Arg25, Glu82, and Arg125. Positions 221 to 374 constitute a TrmE-type G domain; sequence GLHVVLAGKP…LRARLLALAG (154 aa). Asn231 contributes to the K(+) binding site. GTP is bound by residues 231–236, 250–256, 275–278, and 355–357; these read NVGKSS, TPIAGTT, DTAG, and SAR. Mg(2+) is bound at residue Ser235. K(+) is bound by residues Thr250, Ile252, and Thr255. A Mg(2+)-binding site is contributed by Thr256. Position 452 (Lys452) interacts with (6S)-5-formyl-5,6,7,8-tetrahydrofolate.

This sequence belongs to the TRAFAC class TrmE-Era-EngA-EngB-Septin-like GTPase superfamily. TrmE GTPase family. Homodimer. Heterotetramer of two MnmE and two MnmG subunits. K(+) serves as cofactor.

It is found in the cytoplasm. Functionally, exhibits a very high intrinsic GTPase hydrolysis rate. Involved in the addition of a carboxymethylaminomethyl (cmnm) group at the wobble position (U34) of certain tRNAs, forming tRNA-cmnm(5)s(2)U34. This is tRNA modification GTPase MnmE from Bordetella petrii (strain ATCC BAA-461 / DSM 12804 / CCUG 43448).